The chain runs to 250 residues: Ribosomal RNA small subunit methyltransferase J (250 aa).

Residues 101-102, 117-118, 153-154, and Asp-171 each bind S-adenosyl-L-methionine; these read RD, ER, and SS.

The protein belongs to the methyltransferase superfamily. RsmJ family.

The protein resides in the cytoplasm. It catalyses the reaction guanosine(1516) in 16S rRNA + S-adenosyl-L-methionine = N(2)-methylguanosine(1516) in 16S rRNA + S-adenosyl-L-homocysteine + H(+). Functionally, specifically methylates the guanosine in position 1516 of 16S rRNA. This is Ribosomal RNA small subunit methyltransferase J from Shigella dysenteriae serotype 1 (strain Sd197).